Here is an 86-residue protein sequence, read N- to C-terminus: Acyl carrier protein (86 aa).

In terms of domain architecture, Carrier spans 10-85 (DKIEQKVIEM…DVIKYIKERQ (76 aa)). O-(pantetheine 4'-phosphoryl)serine is present on serine 45.

It belongs to the acyl carrier protein (ACP) family. Post-translationally, 4'-phosphopantetheine is transferred from CoA to a specific serine of apo-ACP by AcpS. This modification is essential for activity because fatty acids are bound in thioester linkage to the sulfhydryl of the prosthetic group.

The protein localises to the cytoplasm. The protein operates within lipid metabolism; fatty acid biosynthesis. In terms of biological role, carrier of the growing fatty acid chain in fatty acid biosynthesis. This Rickettsia prowazekii (strain Madrid E) protein is Acyl carrier protein.